The following is a 518-amino-acid chain: Vesicular inhibitory amino acid transporter (518 aa).

The Cytoplasmic portion of the chain corresponds to Met-1–Met-125. The helical transmembrane segment at Phe-126–Ile-146 threads the bilayer. Topologically, residues Phe-147–Arg-197 are lumenal, vesicle. A helical membrane pass occupies residues Val-198–Ser-218. Over Gly-219–Lys-258 the chain is Cytoplasmic. A helical membrane pass occupies residues Phe-259 to Leu-279. The Lumenal, vesicle portion of the chain corresponds to Ser-280–Lys-298. The helical transmembrane segment at Phe-299–Leu-319 threads the bilayer. Residues Glu-320–Asn-334 lie on the Cytoplasmic side of the membrane. The chain crosses the membrane as a helical span at residues Trp-335–Trp-355. The Lumenal, vesicle segment spans residues Ala-356–Asn-376. Residues Leu-377–Val-397 form a helical membrane-spanning segment. The Cytoplasmic portion of the chain corresponds to Leu-398–Ala-431. A helical membrane pass occupies residues Leu-432–Leu-452. The Lumenal, vesicle portion of the chain corresponds to Thr-453 to Gly-454. A helical membrane pass occupies residues Ser-455–Trp-475. The Cytoplasmic portion of the chain corresponds to Arg-476–Gln-482. The chain crosses the membrane as a helical span at residues Val-483 to His-503. At Ser-504–Asp-518 the chain is on the lumenal, vesicle side.

It belongs to the amino acid/polyamine transporter 2 family. Initially expressed in late neurula stages in the anterior spinal cord. By early tailbud stages, expression extends posteriorly along the entire developing spinal cord and appears in the hindbrain. In late tailbud embryos, expressed in the forebrain, midbrain, hindbrain, spinal cord and retina. In swimming tadpoles, expressed in an extended and more intense pattern including interneurons.

The protein localises to the cytoplasmic vesicle membrane. The protein resides in the presynapse. It catalyses the reaction 4-aminobutanoate(out) + n H(+)(in) = 4-aminobutanoate(in) + n H(+)(out). The catalysed reaction is glycine(out) + n H(+)(in) = glycine(in) + n H(+)(out). It carries out the reaction beta-alanine(out) + n H(+)(in) = beta-alanine(in) + n H(+)(out). In terms of biological role, antiporter that exchanges vesicular protons for cytosolic 4-aminobutanoate or to a lesser extend glycine, thus allowing their secretion from nerve terminals. The transport is equally dependent on the chemical and electrical components of the proton gradient. May also transport beta-alanine. Acidification of GABAergic synaptic vesicles is a prerequisite for 4-aminobutanoate uptake. The sequence is that of Vesicular inhibitory amino acid transporter from Xenopus laevis (African clawed frog).